The primary structure comprises 483 residues: MTYIKGNTGKWEYVIGLEIHAQISSKSKLFSGSSTTFAAMPNSQVSYVDAAMPGMLPVLNKHCVHQAIKTGLALKAQINKYSVFDRKNYFYADLPQGYQISQFYYPIVQNGTMKILTSTGDLKTIRINRLHLEQDAGKSIHDQSPHYSFIDLNRAGIGLMEIVTEPDISSPEEAAEFVKKLRSLLRYIGSCDGDMEKGSMRCDANISVRRSGEPLGIRCEIKNINSIRNIIKAIEFEAKRQVDLIESGGIVIQETRLFNADSGETRTIRLKEEAIDYRYFPDPDLLPLIISDELINKLKANLPELPDQKIEKYMKEFGLSKYDAEVIVADESVAEYFEQAANECNPKMLTNWLTSELFGQLNKASIGISKCKITPSNFAKLIKLIENDTISGKIAKTVFEIMFETGKAPDKIVEEKGLVQVSDNNVLNTVIDEVITENPKSVEDYRSGKEKLFSFFVGQIMKKTGGKANPILVNQLLKEKLGS.

The protein belongs to the GatB/GatE family. GatB subfamily. Heterotrimer of A, B and C subunits.

It catalyses the reaction L-glutamyl-tRNA(Gln) + L-glutamine + ATP + H2O = L-glutaminyl-tRNA(Gln) + L-glutamate + ADP + phosphate + H(+). The enzyme catalyses L-aspartyl-tRNA(Asn) + L-glutamine + ATP + H2O = L-asparaginyl-tRNA(Asn) + L-glutamate + ADP + phosphate + 2 H(+). Functionally, allows the formation of correctly charged Asn-tRNA(Asn) or Gln-tRNA(Gln) through the transamidation of misacylated Asp-tRNA(Asn) or Glu-tRNA(Gln) in organisms which lack either or both of asparaginyl-tRNA or glutaminyl-tRNA synthetases. The reaction takes place in the presence of glutamine and ATP through an activated phospho-Asp-tRNA(Asn) or phospho-Glu-tRNA(Gln). This chain is Aspartyl/glutamyl-tRNA(Asn/Gln) amidotransferase subunit B, found in Rickettsia canadensis (strain McKiel).